Here is a 600-residue protein sequence, read N- to C-terminus: DNA ligase (600 aa).

Aspartate 258 is an ATP binding site. Lysine 260 (N6-AMP-lysine intermediate) is an active-site residue. ATP is bound by residues arginine 265, arginine 280, glutamate 310, phenylalanine 350, arginine 427, and lysine 433.

Belongs to the ATP-dependent DNA ligase family. It depends on Mg(2+) as a cofactor.

The catalysed reaction is ATP + (deoxyribonucleotide)n-3'-hydroxyl + 5'-phospho-(deoxyribonucleotide)m = (deoxyribonucleotide)n+m + AMP + diphosphate.. With respect to regulation, inhibited by PCNA123 and PCNA323. DNA ligase that seals nicks in double-stranded DNA during DNA replication, DNA recombination and DNA repair. The chain is DNA ligase from Sulfurisphaera tokodaii (strain DSM 16993 / JCM 10545 / NBRC 100140 / 7) (Sulfolobus tokodaii).